Consider the following 320-residue polypeptide: MEQVELIPQWYVAPVSVKDEAVVRNLKAKVKALGFDNEILDVRVLKEREVIEEVFSLKSGKLPRSLKNTAFTKWFVLDEDRYLKVKISEKNLLGRYIYIKMIYSEDAWRIIRNFPGITGIVGSSGRGALPTPLDQADADNLEQMLKGISVNPKKRVLVTNTAIVEMDADKFDEKCQYILKHKQVKPEAIAQVNESGEIIDTNQFAQALMEANKAEQDEWNEDVAIVKSEANKVDPSVLIPYLGKYEIVEGDTKVDQLQQFSVGNLVEVHLTGAIHIQGQIKALYQGTINKAVVEVELTTKTQLINLPLENLSFIEVEQSH.

This sequence belongs to the NusG family.

In terms of biological role, participates in transcription elongation, termination and antitermination. The polypeptide is Transcription termination/antitermination protein NusG (Mycoplasma pneumoniae (strain ATCC 29342 / M129 / Subtype 1) (Mycoplasmoides pneumoniae)).